The primary structure comprises 118 residues: MSITSLKNQKEFELINKLGKKFHERYFILVIARNLPTIFLKSQYNTFLGIKVSRKLNKKAVIRNKIKRRIRHLVRIIVSDAKLSAVKFAMIIIPRKGFEEINFSHLNYELSKIVLRNI.

The protein belongs to the RnpA family. In terms of assembly, consists of a catalytic RNA component (M1 or rnpB) and a protein subunit.

The enzyme catalyses Endonucleolytic cleavage of RNA, removing 5'-extranucleotides from tRNA precursor.. Its function is as follows. RNaseP catalyzes the removal of the 5'-leader sequence from pre-tRNA to produce the mature 5'-terminus. It can also cleave other RNA substrates such as 4.5S RNA. The protein component plays an auxiliary but essential role in vivo by binding to the 5'-leader sequence and broadening the substrate specificity of the ribozyme. The sequence is that of Ribonuclease P protein component from Rickettsia akari (strain Hartford).